The primary structure comprises 230 residues: Ribonuclease 3 (230 aa).

The 121-residue stretch at 5–125 (YSRFYNILGY…VIGAIYLDSD (121 aa)) folds into the RNase III domain. Mg(2+) is bound at residue E40. Residue D44 is part of the active site. D111 and E114 together coordinate Mg(2+). The active site involves E114. Positions 153–223 (DSKSKLQEIL…AEKMIEMLSQ (71 aa)) constitute a DRBM domain.

The protein belongs to the ribonuclease III family. As to quaternary structure, homodimer. Mg(2+) is required as a cofactor.

The protein localises to the cytoplasm. It carries out the reaction Endonucleolytic cleavage to 5'-phosphomonoester.. Its function is as follows. Digests double-stranded RNA. Involved in the processing of primary rRNA transcript to yield the immediate precursors to the large and small rRNAs (23S and 16S). Processes some mRNAs, and tRNAs when they are encoded in the rRNA operon. Processes pre-crRNA and tracrRNA of type II CRISPR loci if present in the organism. The sequence is that of Ribonuclease 3 from Francisella tularensis subsp. holarctica (strain FTNF002-00 / FTA).